Here is a 333-residue protein sequence, read N- to C-terminus: Sphingomyelinase C (333 aa).

Residues methionine 1–alanine 27 form the signal peptide. Cysteine 150 and cysteine 186 form a disulfide bridge.

Belongs to the neutral sphingomyelinase family. It depends on Mg(2+) as a cofactor.

Its subcellular location is the secreted. The catalysed reaction is a sphingomyelin + H2O = phosphocholine + an N-acylsphing-4-enine + H(+). Activated by cobalt and manganese ions. Functionally, required, with sphingomyelinase, to effect target cell lysis (hemolysis). The sequence is that of Sphingomyelinase C (sph) from Bacillus cereus.